We begin with the raw amino-acid sequence, 341 residues long: Heat-inducible transcription repressor HrcA (341 aa).

This sequence belongs to the HrcA family.

Functionally, negative regulator of class I heat shock genes (grpE-dnaK-dnaJ and groELS operons). Prevents heat-shock induction of these operons. The protein is Heat-inducible transcription repressor HrcA of Mycobacteroides abscessus (strain ATCC 19977 / DSM 44196 / CCUG 20993 / CIP 104536 / JCM 13569 / NCTC 13031 / TMC 1543 / L948) (Mycobacterium abscessus).